A 312-amino-acid chain; its full sequence is Pantothenate kinase (312 aa).

Residue 92-99 (GSVAVGKS) participates in ATP binding.

It belongs to the prokaryotic pantothenate kinase family.

It is found in the cytoplasm. It carries out the reaction (R)-pantothenate + ATP = (R)-4'-phosphopantothenate + ADP + H(+). It participates in cofactor biosynthesis; coenzyme A biosynthesis; CoA from (R)-pantothenate: step 1/5. The chain is Pantothenate kinase (coaA) from Vibrio cholerae serotype O1 (strain ATCC 39315 / El Tor Inaba N16961).